A 168-amino-acid chain; its full sequence is Photosystem I assembly protein Ycf3 (168 aa).

TPR repeat units lie at residues 35–68 (AFTY…EIDP), 72–105 (SYIL…NPFL), and 120–153 (GEEA…TPGN).

Belongs to the Ycf3 family.

It is found in the plastid. The protein resides in the chloroplast thylakoid membrane. In terms of biological role, essential for the assembly of the photosystem I (PSI) complex. May act as a chaperone-like factor to guide the assembly of the PSI subunits. The polypeptide is Photosystem I assembly protein Ycf3 (Nuphar advena (Common spatterdock)).